The chain runs to 439 residues: Aspartate--tRNA(Asp/Asn) ligase (439 aa).

An L-aspartate-binding site is contributed by Glu177. The interval 199–202 (QLYK) is aspartate. Residue Arg221 coordinates L-aspartate. ATP is bound by residues 221–223 (RAE), 229–231 (RHL), and Glu362. Residues Glu362 and Ser365 each coordinate Mg(2+). Positions 365 and 369 each coordinate L-aspartate. 410-413 (GADR) is a binding site for ATP.

It belongs to the class-II aminoacyl-tRNA synthetase family. Type 2 subfamily. As to quaternary structure, homodimer. The cofactor is Mg(2+).

The protein localises to the cytoplasm. The catalysed reaction is tRNA(Asx) + L-aspartate + ATP = L-aspartyl-tRNA(Asx) + AMP + diphosphate. In terms of biological role, aspartyl-tRNA synthetase with relaxed tRNA specificity since it is able to aspartylate not only its cognate tRNA(Asp) but also tRNA(Asn). Reaction proceeds in two steps: L-aspartate is first activated by ATP to form Asp-AMP and then transferred to the acceptor end of tRNA(Asp/Asn). This chain is Aspartate--tRNA(Asp/Asn) ligase, found in Methanosphaera stadtmanae (strain ATCC 43021 / DSM 3091 / JCM 11832 / MCB-3).